The primary structure comprises 118 residues: MASQSQGIQQLLQAEKRAAEKVSEARKRKNRRLKQAKEEAQAEIEQYRLQREKEFKAKEAAALGSRGSCSTEVEKETQEKMTILQTYFRQNRDEVLDNLLAFVCDIRPEIHENYRING.

An N-acetylalanine modification is found at Ala2.

This sequence belongs to the V-ATPase G subunit family. In terms of assembly, V-ATPase is a heteromultimeric enzyme made up of two complexes: the ATP-hydrolytic V1 complex and the proton translocation V0 complex. The V1 complex consists of three catalytic AB heterodimers that form a heterohexamer, three peripheral stalks each consisting of EG heterodimers, one central rotor including subunits D and F, and the regulatory subunits C and H. The proton translocation complex V0 consists of the proton transport subunit a, a ring of proteolipid subunits c9c'', rotary subunit d, subunits e and f, and the accessory subunits ATP6AP1/Ac45 and ATP6AP2/PRR. As to expression, kidney; localizes to early distal nephron, encompassing thick ascending limbs and distal convoluted tubules (at protein level). Ubiquitous.

The protein localises to the apical cell membrane. Its function is as follows. Subunit of the V1 complex of vacuolar(H+)-ATPase (V-ATPase), a multisubunit enzyme composed of a peripheral complex (V1) that hydrolyzes ATP and a membrane integral complex (V0) that translocates protons. V-ATPase is responsible for acidifying and maintaining the pH of intracellular compartments and in some cell types, is targeted to the plasma membrane, where it is responsible for acidifying the extracellular environment. In aerobic conditions, involved in intracellular iron homeostasis, thus triggering the activity of Fe(2+) prolyl hydroxylase (PHD) enzymes, and leading to HIF1A hydroxylation and subsequent proteasomal degradation. The protein is V-type proton ATPase subunit G 1 (ATP6V1G1) of Homo sapiens (Human).